The chain runs to 2231 residues: Helicase SEN1 (2231 aa).

Residues 1–17 are compositionally biased toward low complexity; it reads MNSNNPDNNNSNNINNN. Disordered regions lie at residues 1–24 and 1032–1061; these read MNSN…KDIA and HPPS…SDND. Residues glutamine 1339 and 1360 to 1364 each bind ATP; that span reads GTGKT. Positions 1491–1511 are disordered; that stretch reads ELRGKLDSESGNPESPMSTED. A compositionally biased stretch (polar residues) spans 1499 to 1510; sequence ESGNPESPMSTE. ATP is bound by residues glutamine 1619, tyrosine 1655, and glutamate 1787. Disordered regions lie at residues 1894–1993 and 2032–2231; these read ITQG…AVVG and QLGL…KPRS. The Nuclear localization signal motif lies at 1909–1927; it reads KRRVVDEGEEADKAVKKKK. Residues 1923–1937 are compositionally biased toward basic residues; that stretch reads VKKKKKEKKKEKKKS. Residues 1938-1950 are compositionally biased toward basic and acidic residues; it reads KADDKKKNNKKAE. Acidic residues predominate over residues 2048-2058; sequence NNEDDDDEDDY. Polar residues-rich tracts occupy residues 2060 to 2088 and 2095 to 2104; these read PSIS…NFSA and QVSQAKQTQV. Positions 2114–2123 are enriched in low complexity; it reads SNSVLSGGSS. Positions 2134–2160 are enriched in polar residues; sequence PNQNGQNGANRTLSQHVGNANQYSTAP. Residues 2210-2220 are compositionally biased toward low complexity; sequence RNSSRRNASSS.

The protein belongs to the DNA2/NAM7 helicase family. In terms of assembly, interacts with RAD2, RNT1 and RPB1. Binds to multiple snoRNAs.

It is found in the nucleus. Its function is as follows. ATP-dependent 5'-&gt;3' DNA/RNA helicase required for the expression and maturation of diverse classes of non-protein-coding RNAs like precursor tRNAs, rRNAs and small nuclear (snRNA) and nucleolar (snoRNA) RNAs. Directs RNA polymerase II transcription termination on snoRNAs as well as on several short protein-coding genes. May also play a role in transcription-coupled nucleotide excision repair. The polypeptide is Helicase SEN1 (SEN1) (Saccharomyces cerevisiae (strain ATCC 204508 / S288c) (Baker's yeast)).